The primary structure comprises 274 residues: tRNA-cytidine(32) 2-sulfurtransferase (274 aa).

The PP-loop motif motif lies at 40-45 (SGGKDS). The [4Fe-4S] cluster site is built by Cys115, Cys118, and Cys206.

This sequence belongs to the TtcA family. As to quaternary structure, homodimer. Mg(2+) is required as a cofactor. The cofactor is [4Fe-4S] cluster.

Its subcellular location is the cytoplasm. The enzyme catalyses cytidine(32) in tRNA + S-sulfanyl-L-cysteinyl-[cysteine desulfurase] + AH2 + ATP = 2-thiocytidine(32) in tRNA + L-cysteinyl-[cysteine desulfurase] + A + AMP + diphosphate + H(+). The protein operates within tRNA modification. Its function is as follows. Catalyzes the ATP-dependent 2-thiolation of cytidine in position 32 of tRNA, to form 2-thiocytidine (s(2)C32). The sulfur atoms are provided by the cysteine/cysteine desulfurase (IscS) system. This Pseudomonas paraeruginosa (strain DSM 24068 / PA7) (Pseudomonas aeruginosa (strain PA7)) protein is tRNA-cytidine(32) 2-sulfurtransferase.